We begin with the raw amino-acid sequence, 186 residues long: Interferon beta (186 aa).

An N-terminal signal peptide occupies residues 1–21; sequence MTYRWILPMALLLCFSTTALS. Tyr-24 is subject to Phosphotyrosine. A disulfide bond links Cys-52 and Cys-161. Asn-101 and Asn-136 each carry an N-linked (GlcNAc...) asparagine glycan.

The protein belongs to the alpha/beta interferon family. Monomer.

The protein localises to the secreted. Functionally, type I interferon cytokine that plays a key role in the innate immune response to infection, developing tumors and other inflammatory stimuli. Signals via binding to high-affinity (IFNAR2) and low-affinity (IFNAR1) heterodimeric receptor, activating the canonical Jak-STAT signaling pathway resulting in transcriptional activation or repression of interferon-regulated genes that encode the effectors of the interferon response, such as antiviral proteins, regulators of cell proliferation and differentiation, and immunoregulatory proteins. Signals mostly via binding to a IFNAR1-IFNAR2 heterodimeric receptor, but can also function with IFNAR1 alone and independently of Jak-STAT pathways. Elicits a wide variety of responses, including antiviral and antibacterial activities, and can regulate the development of B-cells, myelopoiesis and lipopolysaccharide (LPS)-inducible production of tumor necrosis factor. Plays a role in neuronal homeostasis by regulating dopamine turnover and protecting dopaminergic neurons: acts by promoting neuronal autophagy and alpha-synuclein clearance, thereby preventing dopaminergic neuron loss. IFNB1 is more potent than interferon-alpha (IFN-alpha) in inducing the apoptotic and antiproliferative pathways required for control of tumor cell growth. This Equus caballus (Horse) protein is Interferon beta (IFNB1).